The following is a 613-amino-acid chain: Kelch-like protein 36 (613 aa).

Positions 45–112 (CDVVLVVEEQ…LYSSELELDG (68 aa)) constitute a BTB domain. The BACK domain occupies 147 to 249 (YLYLQELASI…PEDILLQRVK (103 aa)). Kelch repeat units lie at residues 294–343 (CLLF…VLGG), 344–395 (FIFV…SIED), 396–442 (MLVA…IYKD), 444–491 (VYIS…SLGD), 492–544 (SIYS…VWQG), and 545–593 (RIYI…VCAL).

In terms of assembly, interacts with CUL3.

The protein operates within protein modification; protein ubiquitination. In terms of biological role, probable substrate-specific adapter of an E3 ubiquitin-protein ligase complex which mediates the ubiquitination and subsequent proteasomal degradation of target proteins. This chain is Kelch-like protein 36 (Klhl36), found in Rattus norvegicus (Rat).